We begin with the raw amino-acid sequence, 232 residues long: Ornithine carbamoyltransferase (232 aa).

Residues glutamine 15, arginine 39, and 66–69 contribute to the carbamoyl phosphate site; that span reads HPTQ. L-ornithine contacts are provided by residues asparagine 99, aspartate 163, and 167–168; that span reads SM. Carbamoyl phosphate contacts are provided by residues 204 to 207 and threonine 232; that span reads HCLP.

It belongs to the aspartate/ornithine carbamoyltransferase superfamily. OTCase family.

The protein resides in the cytoplasm. The catalysed reaction is carbamoyl phosphate + L-ornithine = L-citrulline + phosphate + H(+). Its pathway is amino-acid biosynthesis; L-arginine biosynthesis; L-arginine from L-ornithine and carbamoyl phosphate: step 1/3. This is Ornithine carbamoyltransferase (argF) from Neisseria animalis.